Consider the following 490-residue polypeptide: Aspartyl/glutamyl-tRNA(Asn/Gln) amidotransferase subunit B (490 aa).

Belongs to the GatB/GatE family. GatB subfamily. Heterotrimer of A, B and C subunits.

The enzyme catalyses L-glutamyl-tRNA(Gln) + L-glutamine + ATP + H2O = L-glutaminyl-tRNA(Gln) + L-glutamate + ADP + phosphate + H(+). The catalysed reaction is L-aspartyl-tRNA(Asn) + L-glutamine + ATP + H2O = L-asparaginyl-tRNA(Asn) + L-glutamate + ADP + phosphate + 2 H(+). Its function is as follows. Allows the formation of correctly charged Asn-tRNA(Asn) or Gln-tRNA(Gln) through the transamidation of misacylated Asp-tRNA(Asn) or Glu-tRNA(Gln) in organisms which lack either or both of asparaginyl-tRNA or glutaminyl-tRNA synthetases. The reaction takes place in the presence of glutamine and ATP through an activated phospho-Asp-tRNA(Asn) or phospho-Glu-tRNA(Gln). The chain is Aspartyl/glutamyl-tRNA(Asn/Gln) amidotransferase subunit B from Methylobacterium radiotolerans (strain ATCC 27329 / DSM 1819 / JCM 2831 / NBRC 15690 / NCIMB 10815 / 0-1).